Consider the following 203-residue polypeptide: Putative 3-methyladenine DNA glycosylase (203 aa).

The protein belongs to the DNA glycosylase MPG family.

This chain is Putative 3-methyladenine DNA glycosylase, found in Clostridium tetani (strain Massachusetts / E88).